Consider the following 476-residue polypeptide: Arginine biosynthesis bifunctional protein ArgJ, mitochondrial (476 aa).

Positions 193, 219, 237, 337, 471, and 476 each coordinate substrate. Thr237 functions as the Nucleophile in the catalytic mechanism.

The protein belongs to the ArgJ family. In terms of assembly, heterodimer of an alpha and a beta chain. The alpha and beta chains are autoproteolytically processed from a single precursor protein within the mitochondrion.

The protein localises to the mitochondrion matrix. The enzyme catalyses N(2)-acetyl-L-ornithine + L-glutamate = N-acetyl-L-glutamate + L-ornithine. The catalysed reaction is L-glutamate + acetyl-CoA = N-acetyl-L-glutamate + CoA + H(+). It functions in the pathway amino-acid biosynthesis; L-arginine biosynthesis; L-ornithine and N-acetyl-L-glutamate from L-glutamate and N(2)-acetyl-L-ornithine (cyclic): step 1/1. The protein operates within amino-acid biosynthesis; L-arginine biosynthesis; N(2)-acetyl-L-ornithine from L-glutamate: step 1/4. Functionally, catalyzes two activities which are involved in the cyclic version of arginine biosynthesis: the synthesis of acetylglutamate from glutamate and acetyl-CoA, and of ornithine by transacetylation between acetylornithine and glutamate. In Cryptococcus neoformans var. neoformans serotype D (strain B-3501A) (Filobasidiella neoformans), this protein is Arginine biosynthesis bifunctional protein ArgJ, mitochondrial.